Here is a 444-residue protein sequence, read N- to C-terminus: D(2) dopamine receptor (444 aa).

Residues 1–37 are Extracellular-facing; sequence MDPLNLSWYDDDPESRNWSRPFNGSEGKADRPPYNYY. 3 N-linked (GlcNAc...) asparagine glycosylation sites follow: Asn5, Asn17, and Asn23. The helical transmembrane segment at 38-60 threads the bilayer; it reads AMLLTLLIFVIVFGNVLVCMAVS. Topologically, residues 61-70 are cytoplasmic; that stretch reads REKALQTTTN. A helical transmembrane segment spans residues 71–93; it reads YLIVSLAVADLLVATLVMPWVVY. Residues 94-108 lie on the Extracellular side of the membrane; it reads LEVVGEWKFSRIHCD. A disulfide bridge links Cys107 with Cys182. The helical transmembrane segment at 109–130 threads the bilayer; it reads IFVTLDVMMCTASILNLCAISI. Residues 131–151 lie on the Cytoplasmic side of the membrane; it reads DRYTAVAMPMLYNTRYSSKRR. Residues 152 to 172 traverse the membrane as a helical segment; sequence VTVMIAIVWVLSFTISCPMLF. The Extracellular segment spans residues 173–188; the sequence is GLNNTDQNECIIANPA. The chain crosses the membrane as a helical span at residues 189–213; sequence FVVYSSIVSFYVPFIVTLLVYIKIY. The interaction with PPP1R9B stretch occupies residues 211 to 374; it reads KIYIVLRRRR…SQQKEKKATQ (164 aa). Residues 214–374 are Cytoplasmic-facing; it reads IVLRRRRKRV…SQQKEKKATQ (161 aa). The disordered stretch occupies residues 281-332; the sequence is MEMLSSTSPPERTRYSPIPPSHHQLTLPDPSHHGLHSTPDSPAKPEKNGHAK. Residues 375–396 form a helical membrane-spanning segment; it reads MLAIVLGVFIICWLPFFITHIL. At 397–410 the chain is on the extracellular side; the sequence is NIHCDCNIPPVLYS. A disulfide bond links Cys400 and Cys402. The chain crosses the membrane as a helical span at residues 411–432; that stretch reads AFTWLGYVNSAVNPIIYTTFNI. The Cytoplasmic portion of the chain corresponds to 433–444; the sequence is EFRKAFLKILHC. Residue Cys444 is the site of S-palmitoyl cysteine attachment.

It belongs to the G-protein coupled receptor 1 family. In terms of assembly, forms homo- and heterooligomers with DRD4. The interaction with DRD4 may modulate agonist-induced downstream signaling. Interacts with CADPS and CADPS2. Interacts with GPRASP1, PPP1R9B and CLIC6. Interacts with ARRB2. Interacts with HTR2A. Interacts with DRD1. Interacts with KCNA2. In terms of processing, palmitoylated. Palmitoylation which is required for proper localization to the plasma membrane and stability of the receptor could be carried on by ZDHHC4, ZDHHC3 and ZDHHC8.

It localises to the cell membrane. Its subcellular location is the golgi apparatus membrane. In terms of biological role, dopamine receptor whose activity is mediated by G proteins which inhibit adenylyl cyclase. Positively regulates postnatal regression of retinal hyaloid vessels via suppression of VEGFR2/KDR activity, downstream of OPN5. In Bos taurus (Bovine), this protein is D(2) dopamine receptor (DRD2).